The sequence spans 773 residues: Kelch domain-containing protein 7A (773 aa).

Residues 23-40 (VVLSAAALLLVTAAYKLY) traverse the membrane as a helical segment. Residue asparagine 61 is glycosylated (N-linked (GlcNAc...) asparagine). Disordered stretches follow at residues 64 to 99 (EALG…LDYS) and 114 to 207 (SEEA…APNG). Position 89 is a phosphoserine (serine 89). Over residues 114 to 126 (SEEATRKGSDESQ) the composition is skewed to basic and acidic residues. Asparagine 256 carries N-linked (GlcNAc...) asparagine glycosylation. The interval 296–355 (KADSRPVPCPAALADAPSPGPGPEPLVTGAASRDEAANTAGGGASEAASPQPVASPSAPG) is disordered. Kelch repeat units follow at residues 323–370 (TGAA…ENPE), 488–534 (KRLV…LCTL), 537–585 (YLFV…ALEG), 586–628 (HLYA…ATVC), and 631–673 (EIFV…AVNG). A compositionally biased stretch (low complexity) spans 340–354 (SEAASPQPVASPSAP). Serine 361 carries the post-translational modification Phosphoserine.

Its subcellular location is the membrane. In Mus musculus (Mouse), this protein is Kelch domain-containing protein 7A (Klhdc7a).